The primary structure comprises 138 residues: MTKTIPRIGSRRNGRIGLRKTGRRIPKGIIHVQASFNNTIVTVTDVRGRVVSWSSAGTCGFKGTRRGTPFAAQTAAGNAIRTVVDQGMQRAEVMIKGPGLGRDAALRAIRRSGILLNFVRDVTPMPHNGCRPPKKRRV.

It belongs to the universal ribosomal protein uS11 family. In terms of assembly, part of the 30S ribosomal subunit.

It is found in the plastid. The protein resides in the chloroplast. The chain is Small ribosomal subunit protein uS11c from Acorus calamus (Sweet flag).